The following is a 179-amino-acid chain: Adenine phosphoribosyltransferase (179 aa).

Belongs to the purine/pyrimidine phosphoribosyltransferase family. In terms of assembly, homodimer.

The protein localises to the cytoplasm. The enzyme catalyses AMP + diphosphate = 5-phospho-alpha-D-ribose 1-diphosphate + adenine. The protein operates within purine metabolism; AMP biosynthesis via salvage pathway; AMP from adenine: step 1/1. Catalyzes a salvage reaction resulting in the formation of AMP, that is energically less costly than de novo synthesis. The polypeptide is Adenine phosphoribosyltransferase (Helicobacter pylori (strain HPAG1)).